Reading from the N-terminus, the 240-residue chain is UPF0173 metal-dependent hydrolase OE_2513F (240 aa).

It belongs to the UPF0173 family.

The protein is UPF0173 metal-dependent hydrolase OE_2513F of Halobacterium salinarum (strain ATCC 29341 / DSM 671 / R1).